Reading from the N-terminus, the 202-residue chain is ATP-dependent Clp protease proteolytic subunit 1 (202 aa).

S99 acts as the Nucleophile in catalysis. H123 is a catalytic residue.

This sequence belongs to the peptidase S14 family. In terms of assembly, fourteen ClpP subunits assemble into 2 heptameric rings which stack back to back to give a disk-like structure with a central cavity, resembling the structure of eukaryotic proteasomes.

It localises to the cytoplasm. The catalysed reaction is Hydrolysis of proteins to small peptides in the presence of ATP and magnesium. alpha-casein is the usual test substrate. In the absence of ATP, only oligopeptides shorter than five residues are hydrolyzed (such as succinyl-Leu-Tyr-|-NHMec, and Leu-Tyr-Leu-|-Tyr-Trp, in which cleavage of the -Tyr-|-Leu- and -Tyr-|-Trp bonds also occurs).. Its function is as follows. Cleaves peptides in various proteins in a process that requires ATP hydrolysis. Has a chymotrypsin-like activity. Plays a major role in the degradation of misfolded proteins. The polypeptide is ATP-dependent Clp protease proteolytic subunit 1 (Symbiobacterium thermophilum (strain DSM 24528 / JCM 14929 / IAM 14863 / T)).